Here is a 462-residue protein sequence, read N- to C-terminus: Alanine racemase (462 aa).

The active-site Proton acceptor; specific for D-alanine is K34. Position 34 is an N6-(pyridoxal phosphate)lysine (K34). The interval 73-132 (ASWHESVFRHCEKNYTVIRRSNPVKNSVSQNFFNYFSGLQQCFAPRNDGSSIHATTPKAL) is unknown insert. R193 contacts substrate. Positions 286–332 (DLSNNLSYKEEFEGDTERRTAAYINVREDSSTGSTYKLPLEGGYSRG) constitute an RPE1 insert domain. Y357 functions as the Proton acceptor; specific for L-alanine in the catalytic mechanism. Residue M405 participates in substrate binding.

Belongs to the alanine racemase family. Requires pyridoxal 5'-phosphate as cofactor.

It carries out the reaction L-alanine = D-alanine. Its pathway is amino-acid biosynthesis; D-alanine biosynthesis; D-alanine from L-alanine: step 1/1. Catalyzes the interconversion of L-alanine and D-alanine. May also act on other amino acids. In Rickettsia felis (strain ATCC VR-1525 / URRWXCal2) (Rickettsia azadi), this protein is Alanine racemase (alr).